The sequence spans 1430 residues: MGARASVLSGGKLDAWEKIRLKPGGKKRYRLKHLVWASRELERFALNPSLLETTEGCKKIIGQLQSSLQTGSEELKSLYNAVVVLYYVHQRIDVRDTKEALDKLQEEQDKSQQKEQQKAADKEVSQNYPIVQNIQGQMVHQALSPRTLNAWVKVIEEKAFSPEVIPMFSALSEGATPQDLNTMLNTVGGHQAAMQMLKDTINEEAAEWDRLHPVHAGPIPPGQMREPRGSDIAGTTSTLQEQITWMTGNPPVPVGEIYKRWIILGLNKIVRMYSPVSILDIKQGPKEPFRDYVDRFFKTLRAEQATQEVKNWMTETLLVQNSNPDCKTILKALGPGATLEEMMTACQGVGGPGHKARILAEAMSKATSTAIMMQKSNFKGQKRIVKCFNCGKEGHIARNCRAPRKKGCWKCGKEGHQMKDCTERQANFFRENLAFQQGEARKFSSEQTRANSPASRELRVRRGDNPLPEAGAERRGTGSSLSFPQITLWQRPLVAIRVGGQLREALLDTGADDTVLEDINLPGKWKPKMIGGIGGFIKVRQYDQIPIEICGQKAIGTVLVGPTPVNIIGRNLLTQLGCTLNFPISPIETVPVKLKPGMDGPRVKQWPLTEEKIKALTEICTEMEKEGKISKIGPENPYNTPVFAIKKKDSTKWRKLVDFRELNKRTQDFWEVQLGIPHPAGLKKKKSVTVLDVGDAYFSVPLDKEFRKYTAFTIPSINNETPGIRYQYNVLPQGWKGSPAIFQCSMTKILEPFRAKNPEIVIYQYMDDLYVGSDLEIGQHRTKIEELREHLLKWGFTTPDKKHQKEPPFLWMGYELHPDKWTVQPIQLPEKSSWTVNDIQKLVGKLNWASQIYPGIRIKHLCRLLRGAKALTDVVPLTAEAELELAENREIIKEPVHGVYYDPSKDLIAEIQKQGHDQWTYQIYQEPYKNLKTGKYAKRKSAHTNDVKQLTEVVQKIATESIVIWGKIPKFRLPIQKETWEIWWTEYWQATWIPEWEFVNTPPLVKLWYQLETEPIAGAETFYVDGAANRETKLGKAGYVTDRGRQKVVPLTETTNQKTELQAIHLALQDSGSEVNIVTDSQYALGIIQAQPDKSESELVNQIIEQLIQKEKVYLSWVPAHKGIGGNEQVDKLVSSGIRKVLFLDGIDKAQEEHEKYHNNWRAMASDFNLPPVVAKEIVANCDKCQLKGEAMHGQVDCSPGIWQLDCTHLEGKIILVAVHVASGYIEAEVIPAETGQETAYFILKLAGRWPVKIIHTDNGSNFTSTVVKAACWWAGIQQEFGVPYNPQSQGVVESMNKELKKIIGQIRDQAEHLKTAVQMAVFIHNFKRKGGIGGYSAGERIIDIIATDIQTKELQKQITKIQNFRVYFRDSRDPVWKGPAKLLWKGEGAVVIQDNNEIKVVPRRKAKIIRDYGKQMAGDDCVAGRQDED.

A lipid anchor (N-myristoyl glycine; by host) is attached at glycine 2. Residues 7–31 form an interaction with Gp41 region; the sequence is VLSGGKLDAWEKIRLKPGGKKRYRL. An interaction with host CALM1 region spans residues 8-43; the sequence is LSGGKLDAWEKIRLKPGGKKRYRLKHLVWASRELER. Residues 12–19 are interaction with host AP3D1; sequence KLDAWEKI. The interval 14–33 is interaction with membrane phosphatidylinositol 4,5-bisphosphate and RNA; it reads DAWEKIRLKPGGKKRYRLKH. The Nuclear export signal signature appears at 16–22; that stretch reads WEKIRLK. A Nuclear localization signal motif is present at residues 26 to 32; it reads KKRYRLK. The segment at 73–77 is interaction with membrane phosphatidylinositol 4,5-bisphosphate; that stretch reads EELKS. The interval 105–124 is disordered; it reads QEEQDKSQQKEQQKAADKEV. Tyrosine 128 carries the phosphotyrosine; by host modification. Residues 185 to 223 are interaction with human PPIA/CYPA and NUP153; the sequence is NTVGGHQAAMQMLKDTINEEAAEWDRLHPVHAGPIPPGQ. The interval 273–359 is dimerization/Multimerization of capsid protein p24; that stretch reads YSPVSILDIK…GGPGHKARIL (87 aa). CCHC-type zinc fingers lie at residues 385–402 and 406–423; these read VKCF…NCRA and KGCW…DCTE. A disordered region spans residues 440-479; sequence ARKFSSEQTRANSPASRELRVRRGDNPLPEAGAERRGTGS. Polar residues predominate over residues 445–454; that stretch reads SEQTRANSPA. A dimerization of protease region spans residues 484–488; the sequence is PQITL. The Peptidase A2 domain occupies 503-572; sequence REALLDTGAD…TPVNIIGRNL (70 aa). The active-site For protease activity; shared with dimeric partner is aspartate 508. 2 dimerization of protease regions span residues 532–538 and 571–583; these read GIGGFIK and NLLT…LNFP. Positions 626–816 constitute a Reverse transcriptase domain; that stretch reads EGKISKIGPE…PPFLWMGYEL (191 aa). Mg(2+) is bound by residues aspartate 692, aspartate 767, and aspartate 768. The RT 'primer grip' stretch occupies residues 809–817; the sequence is FLWMGYELH. Positions 980–996 match the Tryptophan repeat motif motif; sequence WEIWWTEYWQATWIPEW. Residues 1016–1139 enclose the RNase H type-1 domain; it reads IAGAETFYVD…VDKLVSSGIR (124 aa). Aspartate 1025, glutamate 1060, aspartate 1080, and aspartate 1131 together coordinate Mg(2+). An Integrase-type zinc finger spans residues 1145–1186; the sequence is DGIDKAQEEHEKYHNNWRAMASDFNLPPVVAKEIVANCDKCQ. Zn(2+) is bound by residues histidine 1154, histidine 1158, cysteine 1182, and cysteine 1185. Residues 1196 to 1346 form the Integrase catalytic domain; sequence VDCSPGIWQL…SAGERIIDII (151 aa). Mg(2+) contacts are provided by aspartate 1206, aspartate 1258, and glutamate 1294. Residues 1365–1412 constitute a DNA-binding region (integrase-type); sequence FRVYFRDSRDPVWKGPAKLLWKGEGAVVIQDNNEIKVVPRRKAKIIRD.

As to quaternary structure, homotrimer; further assembles as hexamers of trimers. Interacts with gp41 (via C-terminus). Interacts with host CALM1; this interaction induces a conformational change in the Matrix protein, triggering exposure of the myristate group. Interacts with host AP3D1; this interaction allows the polyprotein trafficking to multivesicular bodies during virus assembly. Part of the pre-integration complex (PIC) which is composed of viral genome, matrix protein, Vpr and integrase. In terms of assembly, homodimer; the homodimer further multimerizes as homohexamers or homopentamers. Interacts with human PPIA/CYPA; This interaction stabilizes the capsid. Interacts with human NUP153. Interacts with host PDZD8; this interaction stabilizes the capsid. Interacts with monkey TRIM5; this interaction destabilizes the capsid. Homodimer, whose active site consists of two apposed aspartic acid residues. As to quaternary structure, heterodimer of p66 RT and p51 RT (RT p66/p51). Heterodimerization of RT is essential for DNA polymerase activity. The overall folding of the subdomains is similar in p66 RT and p51 RT but the spatial arrangements of the subdomains are dramatically different. In terms of assembly, homotetramer; may further associate as a homohexadecamer. Part of the pre-integration complex (PIC) which is composed of viral genome, matrix protein, Vpr and integrase. Interacts with human SMARCB1/INI1 and human PSIP1/LEDGF isoform 1. Interacts with human KPNA3; this interaction might play a role in nuclear import of the pre-integration complex. Interacts with human NUP153; this interaction might play a role in nuclear import of the pre-integration complex. Requires Mg(2+) as cofactor. In terms of processing, specific enzymatic cleavages by the viral protease yield mature proteins. The protease is released by autocatalytic cleavage. The polyprotein is cleaved during and after budding, this process is termed maturation. Proteolytic cleavage of p66 RT removes the RNase H domain to yield the p51 RT subunit. Nucleocapsid protein p7 might be further cleaved after virus entry. Post-translationally, tyrosine phosphorylated presumably in the virion by a host kinase. Phosphorylation is apparently not a major regulator of membrane association. Phosphorylated possibly by host MAPK1; this phosphorylation is necessary for Pin1-mediated virion uncoating. In terms of processing, methylated by host PRMT6, impairing its function by reducing RNA annealing and the initiation of reverse transcription.

The protein localises to the host cell membrane. The protein resides in the host endosome. It localises to the host multivesicular body. Its subcellular location is the virion membrane. It is found in the host nucleus. The protein localises to the host cytoplasm. The protein resides in the virion. It carries out the reaction Specific for a P1 residue that is hydrophobic, and P1' variable, but often Pro.. The catalysed reaction is Endohydrolysis of RNA in RNA/DNA hybrids. Three different cleavage modes: 1. sequence-specific internal cleavage of RNA. Human immunodeficiency virus type 1 and Moloney murine leukemia virus enzymes prefer to cleave the RNA strand one nucleotide away from the RNA-DNA junction. 2. RNA 5'-end directed cleavage 13-19 nucleotides from the RNA end. 3. DNA 3'-end directed cleavage 15-20 nucleotides away from the primer terminus.. The enzyme catalyses 3'-end directed exonucleolytic cleavage of viral RNA-DNA hybrid.. It catalyses the reaction DNA(n) + a 2'-deoxyribonucleoside 5'-triphosphate = DNA(n+1) + diphosphate. Protease: The viral protease is inhibited by many synthetic protease inhibitors (PIs), such as amprenavir, atazanavir, indinavir, loprinavir, nelfinavir, ritonavir and saquinavir. Use of protease inhibitors in tritherapy regimens permit more ambitious therapeutic strategies. Reverse transcriptase/ribonuclease H: RT can be inhibited either by nucleoside RT inhibitors (NRTIs) or by non nucleoside RT inhibitors (NNRTIs). NRTIs act as chain terminators, whereas NNRTIs inhibit DNA polymerization by binding a small hydrophobic pocket near the RT active site and inducing an allosteric change in this region. Classical NRTIs are abacavir, adefovir (PMEA), didanosine (ddI), lamivudine (3TC), stavudine (d4T), tenofovir (PMPA), zalcitabine (ddC), and zidovudine (AZT). Classical NNRTIs are atevirdine (BHAP U-87201E), delavirdine, efavirenz (DMP-266), emivirine (I-EBU), and nevirapine (BI-RG-587). The tritherapies used as a basic effective treatment of AIDS associate two NRTIs and one NNRTI. Functionally, mediates, with Gag polyprotein, the essential events in virion assembly, including binding the plasma membrane, making the protein-protein interactions necessary to create spherical particles, recruiting the viral Env proteins, and packaging the genomic RNA via direct interactions with the RNA packaging sequence (Psi). Gag-Pol polyprotein may regulate its own translation, by the binding genomic RNA in the 5'-UTR. At low concentration, the polyprotein would promote translation, whereas at high concentration, the polyprotein would encapsidate genomic RNA and then shut off translation. Its function is as follows. Targets the polyprotein to the plasma membrane via a multipartite membrane-binding signal, that includes its myristoylated N-terminus. Matrix protein is part of the pre-integration complex. Implicated in the release from host cell mediated by Vpu. Binds to RNA. In terms of biological role, forms the conical core that encapsulates the genomic RNA-nucleocapsid complex in the virion. Most core are conical, with only 7% tubular. The core is constituted by capsid protein hexamer subunits. The core is disassembled soon after virion entry. Host restriction factors such as TRIM5-alpha or TRIMCyp bind retroviral capsids and cause premature capsid disassembly, leading to blocks in reverse transcription. Capsid restriction by TRIM5 is one of the factors which restricts HIV-1 to the human species. Host PIN1 apparently facilitates the virion uncoating. On the other hand, interactions with PDZD8 or CYPA stabilize the capsid. Encapsulates and protects viral dimeric unspliced genomic RNA (gRNA). Binds these RNAs through its zinc fingers. Acts as a nucleic acid chaperone which is involved in rearangement of nucleic acid secondary structure during gRNA retrotranscription. Also facilitates template switch leading to recombination. As part of the polyprotein, participates in gRNA dimerization, packaging, tRNA incorporation and virion assembly. Functionally, aspartyl protease that mediates proteolytic cleavages of Gag and Gag-Pol polyproteins during or shortly after the release of the virion from the plasma membrane. Cleavages take place as an ordered, step-wise cascade to yield mature proteins. This process is called maturation. Displays maximal activity during the budding process just prior to particle release from the cell. Also cleaves Nef and Vif, probably concomitantly with viral structural proteins on maturation of virus particles. Hydrolyzes host EIF4GI and PABP1 in order to shut off the capped cellular mRNA translation. The resulting inhibition of cellular protein synthesis serves to ensure maximal viral gene expression and to evade host immune response. Also mediates cleavage of host YTHDF3. Mediates cleavage of host CARD8, thereby activating the CARD8 inflammasome, leading to the clearance of latent HIV-1 in patient CD4(+) T-cells after viral reactivation; in contrast, HIV-1 can evade CARD8-sensing when its protease remains inactive in infected cells prior to viral budding. Its function is as follows. Multifunctional enzyme that converts the viral RNA genome into dsDNA in the cytoplasm, shortly after virus entry into the cell. This enzyme displays a DNA polymerase activity that can copy either DNA or RNA templates, and a ribonuclease H (RNase H) activity that cleaves the RNA strand of RNA-DNA heteroduplexes in a partially processive 3' to 5' endonucleasic mode. Conversion of viral genomic RNA into dsDNA requires many steps. A tRNA(3)-Lys binds to the primer-binding site (PBS) situated at the 5'-end of the viral RNA. RT uses the 3' end of the tRNA primer to perform a short round of RNA-dependent minus-strand DNA synthesis. The reading proceeds through the U5 region and ends after the repeated (R) region which is present at both ends of viral RNA. The portion of the RNA-DNA heteroduplex is digested by the RNase H, resulting in a ssDNA product attached to the tRNA primer. This ssDNA/tRNA hybridizes with the identical R region situated at the 3' end of viral RNA. This template exchange, known as minus-strand DNA strong stop transfer, can be either intra- or intermolecular. RT uses the 3' end of this newly synthesized short ssDNA to perform the RNA-dependent minus-strand DNA synthesis of the whole template. RNase H digests the RNA template except for two polypurine tracts (PPTs) situated at the 5'-end and near the center of the genome. It is not clear if both polymerase and RNase H activities are simultaneous. RNase H probably can proceed both in a polymerase-dependent (RNA cut into small fragments by the same RT performing DNA synthesis) and a polymerase-independent mode (cleavage of remaining RNA fragments by free RTs). Secondly, RT performs DNA-directed plus-strand DNA synthesis using the PPTs that have not been removed by RNase H as primers. PPTs and tRNA primers are then removed by RNase H. The 3' and 5' ssDNA PBS regions hybridize to form a circular dsDNA intermediate. Strand displacement synthesis by RT to the PBS and PPT ends produces a blunt ended, linear dsDNA copy of the viral genome that includes long terminal repeats (LTRs) at both ends. In terms of biological role, catalyzes viral DNA integration into the host chromosome, by performing a series of DNA cutting and joining reactions. This enzyme activity takes place after virion entry into a cell and reverse transcription of the RNA genome in dsDNA. The first step in the integration process is 3' processing. This step requires a complex comprising the viral genome, matrix protein, Vpr and integrase. This complex is called the pre-integration complex (PIC). The integrase protein removes 2 nucleotides from each 3' end of the viral DNA, leaving recessed CA OH's at the 3' ends. In the second step, the PIC enters cell nucleus. This process is mediated through integrase and Vpr proteins, and allows the virus to infect a non dividing cell. This ability to enter the nucleus is specific of lentiviruses, other retroviruses cannot and rely on cell division to access cell chromosomes. In the third step, termed strand transfer, the integrase protein joins the previously processed 3' ends to the 5' ends of strands of target cellular DNA at the site of integration. The 5'-ends are produced by integrase-catalyzed staggered cuts, 5 bp apart. A Y-shaped, gapped, recombination intermediate results, with the 5'-ends of the viral DNA strands and the 3' ends of target DNA strands remaining unjoined, flanking a gap of 5 bp. The last step is viral DNA integration into host chromosome. This involves host DNA repair synthesis in which the 5 bp gaps between the unjoined strands are filled in and then ligated. Since this process occurs at both cuts flanking the HIV genome, a 5 bp duplication of host DNA is produced at the ends of HIV-1 integration. Alternatively, Integrase may catalyze the excision of viral DNA just after strand transfer, this is termed disintegration. The chain is Gag-Pol polyprotein (gag-pol) from Human immunodeficiency virus type 1 group M subtype F2 (isolate MP255) (HIV-1).